Consider the following 341-residue polypeptide: MNVKDFDFYLPEELIAQHPLEKRDTSRLMVLDKETGEISHKNFYDIIDYLNEGDTLVLNNTRVMPARLIGEKEGTGGKIEFLLLKRVDKDRWECLAKPGKSARVGRRFTFGDGKLKAEVVEVKENGNRIVEFYYEGIFEEVLDSLGEMPLPPYIHERLEDRERYQTVYSKENGSAAAPTAGLHFTEELLHKIKEKGINIAYVTLHVGLGTFRPVKVETIEDHEMHSEYYHLSKEDAEVINETKKRGNRVISVGTTSTRTLETIADEDGNVKETSGWTNIFIYPGYKFKVVDRLITNFHLPESTLIMLVSTLAGKEHVMNAYEEAVKERYRFFSFGDAMFIK.

The protein belongs to the QueA family. In terms of assembly, monomer.

It is found in the cytoplasm. The catalysed reaction is 7-aminomethyl-7-carbaguanosine(34) in tRNA + S-adenosyl-L-methionine = epoxyqueuosine(34) in tRNA + adenine + L-methionine + 2 H(+). It participates in tRNA modification; tRNA-queuosine biosynthesis. Its function is as follows. Transfers and isomerizes the ribose moiety from AdoMet to the 7-aminomethyl group of 7-deazaguanine (preQ1-tRNA) to give epoxyqueuosine (oQ-tRNA). The protein is S-adenosylmethionine:tRNA ribosyltransferase-isomerase of Clostridium botulinum (strain Alaska E43 / Type E3).